The following is a 181-amino-acid chain: ATP synthase subunit delta (181 aa).

This sequence belongs to the ATPase delta chain family. As to quaternary structure, F-type ATPases have 2 components, F(1) - the catalytic core - and F(0) - the membrane proton channel. F(1) has five subunits: alpha(3), beta(3), gamma(1), delta(1), epsilon(1). CF(0) has four main subunits: a(1), b(1), b'(1) and c(10-14). The alpha and beta chains form an alternating ring which encloses part of the gamma chain. F(1) is attached to F(0) by a central stalk formed by the gamma and epsilon chains, while a peripheral stalk is formed by the delta, b and b' chains.

Its subcellular location is the cellular thylakoid membrane. F(1)F(0) ATP synthase produces ATP from ADP in the presence of a proton or sodium gradient. F-type ATPases consist of two structural domains, F(1) containing the extramembraneous catalytic core and F(0) containing the membrane proton channel, linked together by a central stalk and a peripheral stalk. During catalysis, ATP synthesis in the catalytic domain of F(1) is coupled via a rotary mechanism of the central stalk subunits to proton translocation. In terms of biological role, this protein is part of the stalk that links CF(0) to CF(1). It either transmits conformational changes from CF(0) to CF(1) or is implicated in proton conduction. The chain is ATP synthase subunit delta from Synechococcus sp. (strain RCC307).